Reading from the N-terminus, the 513-residue chain is Ankyrin repeat domain-containing protein 13C-B (513 aa).

Basic and acidic residues predominate over residues 1–19 (MTGEKIRSLHRDQKPSKDE). 2 disordered regions span residues 1–34 (MTGE…DGTF) and 55–77 (PSNP…PMTP). Acidic residues predominate over residues 20–29 (DLLEPDEEAT). ANK repeat units lie at residues 83 to 114 (DVYF…QKDN), 115 to 144 (HGNT…PVKV), and 148 to 177 (QGWS…QQSR).

The protein resides in the endoplasmic reticulum membrane. Acts as a molecular chaperone for G protein-coupled receptors, regulating their biogenesis and exit from the ER. The protein is Ankyrin repeat domain-containing protein 13C-B (ankrd13c-b) of Xenopus laevis (African clawed frog).